We begin with the raw amino-acid sequence, 429 residues long: tRNA(Ile2) 2-agmatinylcytidine synthetase TiaS (429 aa).

Residues 403–429 (KPPERPLHPSKSLEPPSTPIHSDTISL) form a disordered region.

The protein belongs to the TiaS family.

The protein resides in the cytoplasm. It catalyses the reaction cytidine(34) in tRNA(Ile2) + agmatine + ATP + H2O = 2-agmatinylcytidine(34) in tRNA(Ile2) + AMP + 2 phosphate + 2 H(+). Its function is as follows. ATP-dependent agmatine transferase that catalyzes the formation of 2-agmatinylcytidine (agm2C) at the wobble position (C34) of tRNA(Ile2), converting the codon specificity from AUG to AUA. In Hyperthermus butylicus (strain DSM 5456 / JCM 9403 / PLM1-5), this protein is tRNA(Ile2) 2-agmatinylcytidine synthetase TiaS.